The chain runs to 401 residues: Argininosuccinate synthase (401 aa).

8-16 (AYSGGLDTS) is a binding site for ATP. Residue Y85 participates in L-citrulline binding. Residue G115 coordinates ATP. L-aspartate-binding residues include T117, N121, and D122. Position 121 (N121) interacts with L-citrulline. L-citrulline-binding residues include R125, S173, E258, and Y270.

The protein belongs to the argininosuccinate synthase family. Type 1 subfamily. Homotetramer.

The protein resides in the cytoplasm. The catalysed reaction is L-citrulline + L-aspartate + ATP = 2-(N(omega)-L-arginino)succinate + AMP + diphosphate + H(+). The protein operates within amino-acid biosynthesis; L-arginine biosynthesis; L-arginine from L-ornithine and carbamoyl phosphate: step 2/3. The chain is Argininosuccinate synthase from Staphylococcus epidermidis (strain ATCC 35984 / DSM 28319 / BCRC 17069 / CCUG 31568 / BM 3577 / RP62A).